The chain runs to 686 residues: XK-related protein 5 (686 aa).

5 consecutive transmembrane segments (helical) span residues 33 to 53 (LLWG…QALS), 205 to 225 (HFWV…WLVA), 239 to 259 (LFNL…WDSP), 265 to 285 (VTFY…ATDF), and 297 to 317 (IAGV…YYSL). Disordered regions lie at residues 340 to 362 (DKTE…ESSG), 444 to 470 (LQRK…NSSA), and 490 to 589 (FASD…VGLA). 2 stretches are compositionally biased toward polar residues: residues 455–470 (LPSS…NSSA) and 490–509 (FASD…TQGE). Residues 523-536 (QGKGTGGQQRGGEG) are compositionally biased toward gly residues. The segment covering 550–567 (VATSSQQEGSPATLQTAH) has biased composition (polar residues).

It belongs to the XK family.

Its subcellular location is the cell membrane. The sequence is that of XK-related protein 5 from Pan troglodytes (Chimpanzee).